Consider the following 235-residue polypeptide: Probable 2-phosphosulfolactate phosphatase (235 aa).

The protein belongs to the ComB family. Mg(2+) is required as a cofactor.

The enzyme catalyses (2R)-O-phospho-3-sulfolactate + H2O = (2R)-3-sulfolactate + phosphate. The chain is Probable 2-phosphosulfolactate phosphatase from Clostridium novyi (strain NT).